We begin with the raw amino-acid sequence, 364 residues long: Palmitoyltransferase ZDHHC9 (364 aa).

At 1-35 (MSVMVVRKKVTRKWEKLPGRNTFCCDGRVMMARQK) the chain is on the cytoplasmic side. The helical transmembrane segment at 36 to 56 (GIFYLTLFLILGTCTLFFAFE) threads the bilayer. The Lumenal portion of the chain corresponds to 57–63 (CRYLAVQ). The chain crosses the membrane as a helical span at residues 64–84 (LSPAIPVFAAMLFLFSMATLL). The Cytoplasmic segment spans residues 85 to 183 (RTSFSDPGVI…NCVGKRNYRY (99 aa)). Residues 139–189 (KYCYTCKIFRPPRASHCSICDNCVERFDHHCPWVGNCVGKRNYRYFYLFIL) enclose the DHHC domain. C169 (S-palmitoyl cysteine intermediate) is an active-site residue. A helical membrane pass occupies residues 184–204 (FYLFILSLSLLTIYVFAFNIV). Over 205–228 (YVALKSLKIGFLETLKETPGTVLE) the chain is Lumenal. The chain crosses the membrane as a helical span at residues 229–249 (VLICFFTLWSVVGLTGFHTFL). Residues 250–364 (VALNQTTNED…PPQEAAEAEK (115 aa)) lie on the Cytoplasmic side of the membrane. The tract at residues 303–364 (PLEESGSRPP…PPQEAAEAEK (62 aa)) is disordered. The segment covering 310 to 323 (RPPSTQETSSSLLP) has biased composition (polar residues). Over residues 346-356 (EMPPPEPPEPP) the composition is skewed to pro residues.

This sequence belongs to the DHHC palmitoyltransferase family. ERF2/ZDHHC9 subfamily. As to quaternary structure, interacts with GOLGA7. As to expression, highly expressed in kidney, skeletal muscle, brain, lung and liver. Absent in thymus, spleen and leukocytes.

It is found in the endoplasmic reticulum membrane. It localises to the golgi apparatus membrane. The enzyme catalyses L-cysteinyl-[protein] + hexadecanoyl-CoA = S-hexadecanoyl-L-cysteinyl-[protein] + CoA. Its function is as follows. Palmitoyltransferase that catalyzes the addition of palmitate onto various protein substrates, such as ADRB2, GSDMD, HRAS, NRAS and CGAS. The ZDHHC9-GOLGA7 complex is a palmitoyltransferase specific for HRAS and NRAS. May have a palmitoyltransferase activity toward the beta-2 adrenergic receptor/ADRB2 and therefore regulate G protein-coupled receptor signaling. Acts as a regulator of innate immunity by catalyzing palmitoylation of CGAS, thereby promoting CGAS homodimerization and cyclic GMP-AMP synthase activity. Activates pyroptosis by catalyzing palmitoylation of gasdermin-D (GSDMD), thereby promoting membrane translocation and pore formation of GSDMD. Functionally, (Microbial infection) Through a sequential action with ZDHHC20, rapidly and efficiently palmitoylates SARS coronavirus-2/SARS-CoV-2 spike protein following its synthesis in the endoplasmic reticulum (ER). In the infected cell, promotes spike biogenesis by protecting it from premature ER degradation, increases half-life and controls the lipid organization of its immediate membrane environment. Once the virus has formed, spike palmitoylation controls fusion with the target cell. The chain is Palmitoyltransferase ZDHHC9 from Homo sapiens (Human).